The following is a 351-amino-acid chain: Translation initiation factor eIF2B subunit beta (351 aa).

It belongs to the eIF-2B alpha/beta/delta subunits family. As to quaternary structure, component of the translation initiation factor 2B (eIF2B) complex which is a heterodecamer of two sets of five different subunits: alpha, beta, gamma, delta and epsilon. Subunits alpha, beta and delta comprise a regulatory subcomplex and subunits epsilon and gamma comprise a catalytic subcomplex. Within the complex, the hexameric regulatory complex resides at the center, with the two heterodimeric catalytic subcomplexes bound on opposite sides.

Its subcellular location is the cytoplasm. It localises to the cytosol. With respect to regulation, activated by the chemical integrated stress response (ISR) inhibitor ISRIB which stimulates guanine nucleotide exchange factor activity for both phosphorylated and unphosphorylated eIF2. Functionally, acts as a component of the translation initiation factor 2B (eIF2B) complex, which catalyzes the exchange of GDP for GTP on eukaryotic initiation factor 2 (eIF2) gamma subunit. Its guanine nucleotide exchange factor activity is repressed when bound to eIF2 complex phosphorylated on the alpha subunit, thereby limiting the amount of methionyl-initiator methionine tRNA available to the ribosome and consequently global translation is repressed. In Oryctolagus cuniculus (Rabbit), this protein is Translation initiation factor eIF2B subunit beta (EIF2B2).